A 157-amino-acid chain; its full sequence is Ribosome-binding factor A (157 aa).

Residues Arg-126–Glu-157 are disordered. Residues Glu-145–Glu-157 are compositionally biased toward acidic residues.

The protein belongs to the RbfA family. In terms of assembly, monomer. Binds 30S ribosomal subunits, but not 50S ribosomal subunits or 70S ribosomes.

Its subcellular location is the cytoplasm. Its function is as follows. One of several proteins that assist in the late maturation steps of the functional core of the 30S ribosomal subunit. Associates with free 30S ribosomal subunits (but not with 30S subunits that are part of 70S ribosomes or polysomes). Required for efficient processing of 16S rRNA. May interact with the 5'-terminal helix region of 16S rRNA. The polypeptide is Ribosome-binding factor A (Bifidobacterium longum (strain DJO10A)).